A 95-amino-acid chain; its full sequence is SFLADHAIFKCTNIGSSLKFCLLAEGKADVYPRFTRTMEWDTAAGDAVLRAAGGSTVTLDGTPLTYGKTGTAADFDFANPNFISWGGRKRVLEPA.

This sequence belongs to the inositol monophosphatase superfamily.

This is an uncharacterized protein from Rhizobium leguminosarum bv. phaseoli.